Reading from the N-terminus, the 188-residue chain is Gag polyprotein (188 aa).

The span at 77-90 (VGETTVQRDAKMAP) shows a compositional bias: basic and acidic residues. Residues 77–99 (VGETTVQRDAKMAPEETATPKTV) form a disordered region. The short motif at 121–124 (PPPY) is the PPXY motif element. The segment at 130 to 166 (YPSLAGVGEQQGQGGDTPRGAEQPRAEPGHAGLAPGP) is disordered.

Post-translationally, specific enzymatic cleavages in vivo yield mature proteins.

It localises to the virion. The polypeptide is Gag polyprotein (ev-2) (Galliformes (EV-2)).